Reading from the N-terminus, the 264-residue chain is Thymidylate synthase (264 aa).

Position 21 (Arg-21) interacts with dUMP. His-51 lines the (6R)-5,10-methylene-5,6,7,8-tetrahydrofolate pocket. 126-127 contributes to the dUMP binding site; that stretch reads RR. Catalysis depends on Cys-146, which acts as the Nucleophile. DUMP contacts are provided by residues 166–169, Asn-177, and 207–209; these read RSCD and HLY. (6R)-5,10-methylene-5,6,7,8-tetrahydrofolate is bound at residue Asp-169. Ala-263 contacts (6R)-5,10-methylene-5,6,7,8-tetrahydrofolate.

Belongs to the thymidylate synthase family. Bacterial-type ThyA subfamily. Homodimer.

It localises to the cytoplasm. It carries out the reaction dUMP + (6R)-5,10-methylene-5,6,7,8-tetrahydrofolate = 7,8-dihydrofolate + dTMP. Its pathway is pyrimidine metabolism; dTTP biosynthesis. Catalyzes the reductive methylation of 2'-deoxyuridine-5'-monophosphate (dUMP) to 2'-deoxythymidine-5'-monophosphate (dTMP) while utilizing 5,10-methylenetetrahydrofolate (mTHF) as the methyl donor and reductant in the reaction, yielding dihydrofolate (DHF) as a by-product. This enzymatic reaction provides an intracellular de novo source of dTMP, an essential precursor for DNA biosynthesis. In Buchnera aphidicola subsp. Baizongia pistaciae (strain Bp), this protein is Thymidylate synthase.